The sequence spans 372 residues: Forkhead box protein F1-B (372 aa).

The segment at 1–51 is disordered; that stretch reads MTAEIQQPPSQPPAQSSPMSAATDKHGGQPSAMESASCATKTKKTNAGIRR. Residues 13-22 show a composition bias toward low complexity; the sequence is PAQSSPMSAA. A DNA-binding region (fork-head) is located at residues 54 to 148; it reads KPPYSYIALI…EEGSFRRRPR (95 aa).

In terms of tissue distribution, at the late gastrula stage, expressed in the presumptive ventrolateral mesoderm. During neurulation and tailbud stages, expressed in the lateral plate mesoderm and in the neural crest-derived structures of the head and branchial arches. During tailbud stages, expressed in the pronephros and pronephros ducts and in cells that migrate from the dorsolateral plate to the ventral region of the embryo (with the notable exception of the heart). These cells may represent hematopoietic or endothelial progenitor cells.

Its subcellular location is the nucleus. In terms of biological role, probable transcription factor. Required for smooth muscle (visceral mesoderm) differentiation during gut development. Also required for normal proliferation of the lateral plate mesoderm. Acts as a downstream mediator of bmp4-signaling. This chain is Forkhead box protein F1-B (foxf1-b), found in Xenopus laevis (African clawed frog).